The primary structure comprises 164 residues: Telomerase-associated protein of 19 kDa (164 aa).

In terms of assembly, component of the telomerase holoenzyme complex, composed of the catalytic core (the catalytic subunit TERT, the telomerase RNA template component TER and TAP65/p65), which is associated with two heterotrimeric subcomplexes: (i) the replication protein A (RPA)-related subcomplex, composed of TEB1, RPA2/TEB2 and RPA3/TEB3 and (ii) the CST-like subcomplex, composed of TAP75/p75, TAP45/p45 and TAP19/p19. TEB1 and the CST-like subcomplex are tethered to the catalytic core by TAP50/p50.

It localises to the chromosome. Its subcellular location is the telomere. Component of a CST-like subcomplex of the holoenzyme telomerase ribonucleoprotein complex, which stimulates telomerase complementary-strand synthesis. Telomerase is an essential ribonucleoprotein enzyme that copies new telomeric repeats onto chromosome ends by repetitively synthesizing the short telomere-repeat sequence 5'-TTGGGG-3' using an RNA template component TER. The CST-like subcomplex (also named 7-4-1) binds telomeric single-stranded DNA and coordinates telomere G-strand and C-strand synthesis. In Tetrahymena thermophila (strain SB210), this protein is Telomerase-associated protein of 19 kDa.